The chain runs to 138 residues: Putative pre-16S rRNA nuclease (138 aa).

The protein belongs to the YqgF nuclease family.

Its subcellular location is the cytoplasm. In terms of biological role, could be a nuclease involved in processing of the 5'-end of pre-16S rRNA. The protein is Putative pre-16S rRNA nuclease of Escherichia coli O7:K1 (strain IAI39 / ExPEC).